The sequence spans 433 residues: Trigger factor (433 aa).

One can recognise a PPIase FKBP-type domain in the interval G165–V250.

This sequence belongs to the FKBP-type PPIase family. Tig subfamily.

It localises to the cytoplasm. The catalysed reaction is [protein]-peptidylproline (omega=180) = [protein]-peptidylproline (omega=0). In terms of biological role, involved in protein export. Acts as a chaperone by maintaining the newly synthesized protein in an open conformation. Functions as a peptidyl-prolyl cis-trans isomerase. This is Trigger factor from Sulfurimonas denitrificans (strain ATCC 33889 / DSM 1251) (Thiomicrospira denitrificans (strain ATCC 33889 / DSM 1251)).